A 412-amino-acid polypeptide reads, in one-letter code: Multifunctional CCA protein (412 aa).

The ATP site is built by Gly-8 and Arg-11. The CTP site is built by Gly-8 and Arg-11. 2 residues coordinate Mg(2+): Glu-21 and Asp-23. ATP-binding residues include Arg-91, Arg-137, and Arg-140. CTP contacts are provided by Arg-91, Arg-137, and Arg-140. Residues 228 to 329 (CGIHTLMSLQ…WRLLQRLDVL (102 aa)) enclose the HD domain.

Belongs to the tRNA nucleotidyltransferase/poly(A) polymerase family. Bacterial CCA-adding enzyme type 1 subfamily. As to quaternary structure, monomer. Can also form homodimers and oligomers. Requires Mg(2+) as cofactor. The cofactor is Ni(2+).

It carries out the reaction a tRNA precursor + 2 CTP + ATP = a tRNA with a 3' CCA end + 3 diphosphate. The enzyme catalyses a tRNA with a 3' CCA end + 2 CTP + ATP = a tRNA with a 3' CCACCA end + 3 diphosphate. Catalyzes the addition and repair of the essential 3'-terminal CCA sequence in tRNAs without using a nucleic acid template. Adds these three nucleotides in the order of C, C, and A to the tRNA nucleotide-73, using CTP and ATP as substrates and producing inorganic pyrophosphate. tRNA 3'-terminal CCA addition is required both for tRNA processing and repair. Also involved in tRNA surveillance by mediating tandem CCA addition to generate a CCACCA at the 3' terminus of unstable tRNAs. While stable tRNAs receive only 3'-terminal CCA, unstable tRNAs are marked with CCACCA and rapidly degraded. This chain is Multifunctional CCA protein, found in Acinetobacter baumannii (strain ATCC 17978 / DSM 105126 / CIP 53.77 / LMG 1025 / NCDC KC755 / 5377).